A 141-amino-acid chain; its full sequence is Endoribonuclease YbeY (141 aa).

Zn(2+) contacts are provided by His-105, His-109, and Asp-115.

The protein belongs to the endoribonuclease YbeY family. Zn(2+) serves as cofactor.

The protein localises to the cytoplasm. In terms of biological role, single strand-specific metallo-endoribonuclease involved in late-stage 70S ribosome quality control and in maturation of the 3' terminus of the 16S rRNA. This Karelsulcia muelleri (strain GWSS) (Sulcia muelleri) protein is Endoribonuclease YbeY.